Reading from the N-terminus, the 160-residue chain is MSVTKKPDLSDPVLKAKLAKGMGHNTYGEPAWPNDLLYMFPVVILGTFACVIGLSVLDPAAMGEPANPFATPLEILPEWYFYPVFQILRVVPNKLLGVLLMAAVPAGLITVPFIESINKFQNPYRRPIATILFLLGTLVAVWLGIGSTFPIDISLTLGLF.

3 consecutive transmembrane segments (helical) span residues 36-56, 95-115, and 131-151; these read LLYM…GLSV, LLGV…PFIE, and ILFL…TFPI.

The protein belongs to the cytochrome b family. PetD subfamily. As to quaternary structure, the 4 large subunits of the cytochrome b6-f complex are cytochrome b6, subunit IV (17 kDa polypeptide, petD), cytochrome f and the Rieske protein, while the 4 small subunits are petG, petL, petM and petN. The complex functions as a dimer. In terms of processing, the N-terminus is blocked.

Its subcellular location is the plastid. It localises to the chloroplast thylakoid membrane. Functionally, component of the cytochrome b6-f complex, which mediates electron transfer between photosystem II (PSII) and photosystem I (PSI), cyclic electron flow around PSI, and state transitions. This is Cytochrome b6-f complex subunit 4 from Chlamydomonas reinhardtii (Chlamydomonas smithii).